The chain runs to 319 residues: MASKRKHQASQKVKEESFKKHTLDSDEEDSDDYEREYLNDSDIEGGEEGVAKVEDDVKVTPFNMKEELEEGHFDKDGHYHWNKETEAKDNWLDNIDWVKIGTQKNAFDPAKDEENSSDEEKNEPVGKAFNLSMNLMKMVEFMKPGETVKMTLQRLGKQRPVLTTLQRIKQKKAGIVDPKTQEISQLTELANEILSKTGNMDIYQDTYESIKAKIADLPGTSKPKVADDIDMYADDFETKELERSKTSSSDSSKPTTTTSEVTWEFKWSQDETDIQGPFSTEKMLKWSQENYFKNGVYVRKCGENTNFYTSNRIDFDLYL.

2 disordered regions span residues 1–57 and 105–124; these read MASK…EDDV and NAFD…KNEP. Positions 12-24 are enriched in basic and acidic residues; the sequence is KVKEESFKKHTLD. Ser25 and Ser30 each carry phosphoserine. A compositionally biased stretch (acidic residues) spans 25-47; that stretch reads SDEEDSDDYEREYLNDSDIEGGE. Position 37 is a phosphotyrosine (Tyr37). Ser41 carries the post-translational modification Phosphoserine. The span at 109–124 shows a compositional bias: basic and acidic residues; sequence PAKDEENSSDEEKNEP. Residues 260-316 enclose the GYF domain; the sequence is EVTWEFKWSQDETDIQGPFSTEKMLKWSQENYFKNGVYVRKCGENTNFYTSNRIDFD.

Its subcellular location is the nucleus. Required for embryonic epithelial tissue repair, but not for the assembly of the actomyosin cable at the wound edge. Probably acts downstream of rl in the regulation of Ddc and msn transcription to promote wound healing. In Drosophila melanogaster (Fruit fly), this protein is CD2 antigen cytoplasmic tail-binding protein 2 homolog (holn1).